The primary structure comprises 223 residues: Small ribosomal subunit protein uS3 (223 aa).

The KH type-2 domain maps to 39–108; the sequence is IRKFVKKKGA…VILINIVEVK (70 aa).

It belongs to the universal ribosomal protein uS3 family. Part of the 30S ribosomal subunit. Forms a tight complex with proteins S10 and S14.

Functionally, binds the lower part of the 30S subunit head. Binds mRNA in the 70S ribosome, positioning it for translation. This is Small ribosomal subunit protein uS3 from Clostridium kluyveri (strain NBRC 12016).